The primary structure comprises 306 residues: Aspartate carbamoyltransferase catalytic subunit (306 aa).

Residues Arg-54 and Thr-55 each coordinate carbamoyl phosphate. L-aspartate is bound at residue Lys-83. Carbamoyl phosphate-binding residues include Arg-104, His-132, and Gln-135. Residues Arg-165 and Arg-227 each coordinate L-aspartate. The carbamoyl phosphate site is built by Leu-266 and Pro-267.

Belongs to the aspartate/ornithine carbamoyltransferase superfamily. ATCase family. Heterododecamer (2C3:3R2) of six catalytic PyrB chains organized as two trimers (C3), and six regulatory PyrI chains organized as three dimers (R2).

It catalyses the reaction carbamoyl phosphate + L-aspartate = N-carbamoyl-L-aspartate + phosphate + H(+). Its pathway is pyrimidine metabolism; UMP biosynthesis via de novo pathway; (S)-dihydroorotate from bicarbonate: step 2/3. Its function is as follows. Catalyzes the condensation of carbamoyl phosphate and aspartate to form carbamoyl aspartate and inorganic phosphate, the committed step in the de novo pyrimidine nucleotide biosynthesis pathway. The protein is Aspartate carbamoyltransferase catalytic subunit of Clostridium novyi (strain NT).